The sequence spans 170 residues: ATP synthase subunit b (170 aa).

Residues 11 to 31 traverse the membrane as a helical segment; the sequence is AFTFGDAFFTLFAFAILLVLI.

This sequence belongs to the ATPase B chain family. F-type ATPases have 2 components, F(1) - the catalytic core - and F(0) - the membrane proton channel. F(1) has five subunits: alpha(3), beta(3), gamma(1), delta(1), epsilon(1). F(0) has three main subunits: a(1), b(2) and c(10-14). The alpha and beta chains form an alternating ring which encloses part of the gamma chain. F(1) is attached to F(0) by a central stalk formed by the gamma and epsilon chains, while a peripheral stalk is formed by the delta and b chains.

The protein resides in the cell membrane. Functionally, f(1)F(0) ATP synthase produces ATP from ADP in the presence of a proton or sodium gradient. F-type ATPases consist of two structural domains, F(1) containing the extramembraneous catalytic core and F(0) containing the membrane proton channel, linked together by a central stalk and a peripheral stalk. During catalysis, ATP synthesis in the catalytic domain of F(1) is coupled via a rotary mechanism of the central stalk subunits to proton translocation. In terms of biological role, component of the F(0) channel, it forms part of the peripheral stalk, linking F(1) to F(0). This chain is ATP synthase subunit b, found in Listeria monocytogenes serotype 4b (strain F2365).